The primary structure comprises 574 residues: MYND-type zinc finger protein C31F10.10c (574 aa).

Disordered stretches follow at residues 207 to 253 and 283 to 307; these read DSGD…QDPR and MTTP…DEID. Composition is skewed to polar residues over residues 243–253 and 283–301; these read IYSNDSFQDPR and MTTP…ASET. The segment at 482 to 523 adopts an MYND-type; degenerate zinc-finger fold; sequence NLLCNKWEEHSRQFAKCRRCRRTKYCSKECQHQAWPGHSRWC. Positions 498, 501, 519, and 523 each coordinate Zn(2+). Residues 534-574 are disordered; the sequence is KRESSKINSVTESESTASPAASVIPVGTESVTSSTQSDSRL. The segment covering 542-556 has biased composition (low complexity); that stretch reads SVTESESTASPAASV. The span at 562–574 shows a compositional bias: polar residues; sequence ESVTSSTQSDSRL.

Belongs to the MUB1/samB family.

It localises to the nucleus. Its subcellular location is the cytoplasm. The protein resides in the cytoskeleton. It is found in the microtubule organizing center. The protein localises to the spindle pole body. This is MYND-type zinc finger protein C31F10.10c from Schizosaccharomyces pombe (strain 972 / ATCC 24843) (Fission yeast).